Here is a 198-residue protein sequence, read N- to C-terminus: ATP-dependent Clp protease proteolytic subunit (198 aa).

The active-site Nucleophile is the Ser101. His126 is a catalytic residue.

The protein belongs to the peptidase S14 family. As to quaternary structure, component of the chloroplastic Clp protease core complex.

The protein localises to the plastid. It is found in the chloroplast stroma. The catalysed reaction is Hydrolysis of proteins to small peptides in the presence of ATP and magnesium. alpha-casein is the usual test substrate. In the absence of ATP, only oligopeptides shorter than five residues are hydrolyzed (such as succinyl-Leu-Tyr-|-NHMec, and Leu-Tyr-Leu-|-Tyr-Trp, in which cleavage of the -Tyr-|-Leu- and -Tyr-|-Trp bonds also occurs).. Cleaves peptides in various proteins in a process that requires ATP hydrolysis. Has a chymotrypsin-like activity. Plays a major role in the degradation of misfolded proteins. This is ATP-dependent Clp protease proteolytic subunit from Psilotum nudum (Whisk fern).